Reading from the N-terminus, the 193-residue chain is Acyl-homoserine-lactone synthase (193 aa).

It belongs to the autoinducer synthase family.

It carries out the reaction a fatty acyl-[ACP] + S-adenosyl-L-methionine = an N-acyl-L-homoserine lactone + S-methyl-5'-thioadenosine + holo-[ACP] + H(+). In terms of biological role, required for the synthesis of N-(3-oxodecanoyl)-L-homoserine lactone (ODHL), an autoinducer molecule which binds to VanR. In Vibrio anguillarum (Listonella anguillarum), this protein is Acyl-homoserine-lactone synthase (vanI).